We begin with the raw amino-acid sequence, 354 residues long: NADH-quinone oxidoreductase subunit H (354 aa).

8 helical membrane-spanning segments follow: residues 25–45 (LVRILVVAVVILLCVAYLILW), 91–111 (WIYLIAPIMVVVPAFAVWAVI), 126–146 (LLYAMAISSIGVYGVILAGWA), 170–190 (MGFALVVVLMTAGTLNLSGIV), 205–225 (FLSWNWLPLLPMFVVYFISGI), 267–287 (IVISALAATLFLGGWSAPFGF), 290–310 (FVPGIVWLVAKVFLLLSVFIW), and 330–350 (IFIPVCVVWLVVVGFWIMSPL).

Belongs to the complex I subunit 1 family. NDH-1 is composed of 14 different subunits. Subunits NuoA, H, J, K, L, M, N constitute the membrane sector of the complex.

The protein resides in the cell inner membrane. The catalysed reaction is a quinone + NADH + 5 H(+)(in) = a quinol + NAD(+) + 4 H(+)(out). Functionally, NDH-1 shuttles electrons from NADH, via FMN and iron-sulfur (Fe-S) centers, to quinones in the respiratory chain. The immediate electron acceptor for the enzyme in this species is believed to be ubiquinone. Couples the redox reaction to proton translocation (for every two electrons transferred, four hydrogen ions are translocated across the cytoplasmic membrane), and thus conserves the redox energy in a proton gradient. This subunit may bind ubiquinone. This Paraburkholderia phytofirmans (strain DSM 17436 / LMG 22146 / PsJN) (Burkholderia phytofirmans) protein is NADH-quinone oxidoreductase subunit H.